Consider the following 79-residue polypeptide: RNA-binding protein KhpA (79 aa).

The KH domain occupies 32 to 79 (FLEYHLNLDQSDVGRVIGRKGRTISAIRTIVYSVPTEYKKVRIVIDEK).

Belongs to the KhpA RNA-binding protein family. Forms a complex with KhpB. KhpA and KhpB colocalize throughout the cell cycle, with some increase at midcell in dividing cells.

It localises to the cytoplasm. Its function is as follows. A probable RNA chaperone. Forms a complex with KhpB which presumably binds to about 170 cellular RNAs (mRNA, tRNA intergenic RNA and sRNAs); the proteins alone each bind the same set of RNAs. A mutation in this gene suppresses the requirement for PBP2b (penA, a transpeptidase) in peripheral peptidoglycan (PG) synthesis. Probably plays a role in PG homeostasis and regulating peripheral PG synthesis. The polypeptide is RNA-binding protein KhpA (Streptococcus pneumoniae serotype 2 (strain D39 / NCTC 7466)).